The chain runs to 159 residues: Ribosomal RNA large subunit methyltransferase H (159 aa).

Residues L76, G108, and 127–132 (FGRMTL) contribute to the S-adenosyl-L-methionine site.

The protein belongs to the RNA methyltransferase RlmH family. Homodimer.

It is found in the cytoplasm. It carries out the reaction pseudouridine(1915) in 23S rRNA + S-adenosyl-L-methionine = N(3)-methylpseudouridine(1915) in 23S rRNA + S-adenosyl-L-homocysteine + H(+). Functionally, specifically methylates the pseudouridine at position 1915 (m3Psi1915) in 23S rRNA. This Lactococcus lactis subsp. cremoris (strain SK11) protein is Ribosomal RNA large subunit methyltransferase H.